We begin with the raw amino-acid sequence, 102 residues long: Small ribosomal subunit protein uS10 (102 aa).

It belongs to the universal ribosomal protein uS10 family. Part of the 30S ribosomal subunit.

Functionally, involved in the binding of tRNA to the ribosomes. The protein is Small ribosomal subunit protein uS10 of Thiobacillus denitrificans (strain ATCC 25259 / T1).